The sequence spans 111 residues: UPF0125 protein SO_1475 (111 aa).

The tract at residues 88 to 111 (VRRRRADKAKDEGRANKVTGGRVS) is disordered.

It belongs to the UPF0125 (RnfH) family.

In Shewanella oneidensis (strain ATCC 700550 / JCM 31522 / CIP 106686 / LMG 19005 / NCIMB 14063 / MR-1), this protein is UPF0125 protein SO_1475.